The primary structure comprises 262 residues: Thiazole synthase (262 aa).

The active-site Schiff-base intermediate with DXP is Lys-96. 1-deoxy-D-xylulose 5-phosphate contacts are provided by residues Gly-157, 184–185, and 206–207; these read AG and NT.

This sequence belongs to the ThiG family. In terms of assembly, homotetramer. Forms heterodimers with either ThiH or ThiS.

It localises to the cytoplasm. It carries out the reaction [ThiS sulfur-carrier protein]-C-terminal-Gly-aminoethanethioate + 2-iminoacetate + 1-deoxy-D-xylulose 5-phosphate = [ThiS sulfur-carrier protein]-C-terminal Gly-Gly + 2-[(2R,5Z)-2-carboxy-4-methylthiazol-5(2H)-ylidene]ethyl phosphate + 2 H2O + H(+). It participates in cofactor biosynthesis; thiamine diphosphate biosynthesis. In terms of biological role, catalyzes the rearrangement of 1-deoxy-D-xylulose 5-phosphate (DXP) to produce the thiazole phosphate moiety of thiamine. Sulfur is provided by the thiocarboxylate moiety of the carrier protein ThiS. In vitro, sulfur can be provided by H(2)S. The sequence is that of Thiazole synthase from Legionella pneumophila (strain Corby).